A 180-amino-acid chain; its full sequence is MKPQIDVIHGDITTMHVDVIVNAANPSLMGGGGVDGAIHRAAGPQLLEACKTVRQQQGECPPGHAVITLAGDLPAKAVIHAVGPIWHGGDRHEASILEEAYRNCLRLAADNGYKTMAFPAISTGVYGYPKAAAATIAVDTVYRYLSLKPMPEKVTFVCFDEETLHLYQRLLTQRGQELEI.

The Macro domain occupies 1–175 (MKPQIDVIHG…LYQRLLTQRG (175 aa)). Substrate is bound by residues 11-12 (DI), asparagine 25, 33-35 (GVD), and 122-126 (STGVY). Aspartate 35 acts as the Proton acceptor in catalysis.

The protein belongs to the MacroD-type family. YmdB subfamily. As to quaternary structure, homodimer. Interacts with RNase III.

The enzyme catalyses 3''-O-acetyl-ADP-D-ribose + H2O = ADP-D-ribose + acetate + H(+). The catalysed reaction is 2''-O-acetyl-ADP-D-ribose + H2O = ADP-D-ribose + acetate + H(+). Deacetylates O-acetyl-ADP ribose to yield ADP-ribose and free acetate. Down-regulates ribonuclease 3 (RNase III) activity. Acts by interacting directly with the region of the ribonuclease that is required for dimerization/activation. The sequence is that of O-acetyl-ADP-ribose deacetylase from Enterobacter cloacae subsp. cloacae (strain ATCC 13047 / DSM 30054 / NBRC 13535 / NCTC 10005 / WDCM 00083 / NCDC 279-56).